The chain runs to 140 residues: uncharacterized protein (140 aa).

The protein belongs to the MG067/MG068/MG395 family.

This is an uncharacterized protein from Mycoplasma pneumoniae (strain ATCC 29342 / M129 / Subtype 1) (Mycoplasmoides pneumoniae).